The chain runs to 384 residues: G protein-coupled receptor 88 (384 aa).

Residues 1-35 lie on the Extracellular side of the membrane; sequence MTNSSSTSTSSTTGGSLLLLCEEEESWAGRRIPVS. Asparagine 3 carries an N-linked (GlcNAc...) asparagine glycan. The chain crosses the membrane as a helical span at residues 36–56; sequence LLYSGLAIGGTLANGMVIYLV. The Cytoplasmic portion of the chain corresponds to 57-73; the sequence is SSFRKLQTTSNAFIVNG. A helical transmembrane segment spans residues 74–94; sequence CAADLSVCALWMPQEAVLGLL. At 95-116 the chain is on the extracellular side; the sequence is PTGSAEPPADWDGAGGSYRLLR. Residues 117-136 traverse the membrane as a helical segment; sequence GGLLGLGLTVSLLSHCLVAL. Residues 137–158 are Cytoplasmic-facing; the sequence is NRYLLITRAPATYQALYQRRHT. A helical transmembrane segment spans residues 159 to 179; the sequence is AGMLALSWALALGLVLLLPPW. At 180–195 the chain is on the extracellular side; it reads APRPGAAPPRVHYPAL. A helical membrane pass occupies residues 196–216; that stretch reads LAAAALLAQTALLLHCYLGIV. At 217–285 the chain is on the cytoplasmic side; sequence RRVRVSVKRV…RAQRRLSGLS (69 aa). Residues 286 to 306 form a helical membrane-spanning segment; that stretch reads VLLLCCVFLLATQPLVWVSLA. The Extracellular segment spans residues 307-310; that stretch reads SGFS. A helical transmembrane segment spans residues 311-331; that stretch reads LPVPWGVQAASWLLCCALSAL. At 332 to 384 the chain is on the cytoplasmic side; sequence NPLLYTWRNEEFRRSVRSVLPGVGDAAAAAVAATAVPAVSQAQLGTRAAGQHW.

Belongs to the G-protein coupled receptor 1 family. Expressed predominantly in the striatum.

It localises to the cell membrane. The protein resides in the cell projection. It is found in the cilium membrane. Its subcellular location is the cytoplasm. The protein localises to the nucleus. In terms of biological role, orphan G protein-coupled receptor implicated in a large repertoire of behavioral responses that engage motor activities, spatial learning, and emotional processing. May play a role in the regulation of cognitive and motor function. Couples with the heterotrimeric G protein complex of the G(i) subfamily, consisting of GNAI1, GNB1 and GNG2, thereby acting through a G(i)-mediated pathway. Plays a role in the attenuation of D1 dopamine receptor (D1R)-mediated cAMP response in ciliated cells. In non-ciliated cells, involved in the inhibition of the beta-2 adrenergic receptor (B2AR) response. The chain is G protein-coupled receptor 88 (GPR88) from Homo sapiens (Human).